We begin with the raw amino-acid sequence, 512 residues long: Dihydroniloticin synthase CYP71CD2 (512 aa).

Residues 1–21 (MNLQLDYFSITSFLVFLVVLF) traverse the membrane as a helical segment. Cysteine 449 lines the heme pocket.

This sequence belongs to the cytochrome P450 family. Heme is required as a cofactor.

The protein resides in the membrane. The enzyme catalyses tirucalla-7,24-dien-3beta-ol + 2 reduced [NADPH--hemoprotein reductase] + 2 O2 = dihydroniloticin + 2 oxidized [NADPH--hemoprotein reductase] + 2 H2O + 2 H(+). It functions in the pathway secondary metabolite biosynthesis; terpenoid biosynthesis. Its function is as follows. Monooxygenase involved in the biosynthesis of limonoids triterpene natural products such as azadirachtin, an antifeedant widely used as bioinsecticide, and possessing many medicinal applications including anti-tumoral, anti-malarial, anti-rheumatic, antibacterial, anti-inflammatory, anti-pyretic and diuretic effects. Catalyzes the conversion of tirucalladienol to dihydroniloticin. The sequence is that of Dihydroniloticin synthase CYP71CD2 from Azadirachta indica (Neem tree).